We begin with the raw amino-acid sequence, 64 residues long: Delta-buthitoxin-Hj2a (64 aa).

4 disulfide bridges follow: Cys-12-Cys-63, Cys-16-Cys-36, Cys-22-Cys-46, and Cys-26-Cys-48. Arg-64 bears the Arginine amide mark.

Belongs to the long (4 C-C) scorpion toxin superfamily. Sodium channel inhibitor family. Alpha subfamily. In terms of tissue distribution, expressed by the venom gland.

The protein localises to the secreted. This non-amidated recombinant toxin slows fast inactivation on Nav1.1/SCN1A (EC(50)=52.8 nM), Nav1.4/SN4A (EC(50)=32 nM), Nav1.5/SCN5A (EC(50)=116.7 nM), Nav1.6/SCN8A (EC(50)=46.3 nM), and Nav1.7/SCN9A (EC(50)=147.4 nM) voltage-gated sodium channels. On Nav1.1/SCN1A channel, acts as an agonist by inducing a shift in both the voltage dependence of channel inactivation (alpha-toxin activity) and activation (beta-toxin activity). In Hottentotta judaicus (Black scorpion), this protein is Delta-buthitoxin-Hj2a.